Here is a 239-residue protein sequence, read N- to C-terminus: Probable transcriptional regulatory protein BLi00754/BL02339 (239 aa).

This sequence belongs to the TACO1 family. YeeN subfamily.

It localises to the cytoplasm. The sequence is that of Probable transcriptional regulatory protein BLi00754/BL02339 from Bacillus licheniformis (strain ATCC 14580 / DSM 13 / JCM 2505 / CCUG 7422 / NBRC 12200 / NCIMB 9375 / NCTC 10341 / NRRL NRS-1264 / Gibson 46).